The following is a 202-amino-acid chain: UPF0301 protein mlr7511 (202 aa).

This sequence belongs to the UPF0301 (AlgH) family.

This Mesorhizobium japonicum (strain LMG 29417 / CECT 9101 / MAFF 303099) (Mesorhizobium loti (strain MAFF 303099)) protein is UPF0301 protein mlr7511.